Here is a 368-residue protein sequence, read N- to C-terminus: DNA replication and repair protein RecF (368 aa).

Residue 30 to 37 (GDNGAGKT) coordinates ATP.

The protein belongs to the RecF family.

It localises to the cytoplasm. In terms of biological role, the RecF protein is involved in DNA metabolism; it is required for DNA replication and normal SOS inducibility. RecF binds preferentially to single-stranded, linear DNA. It also seems to bind ATP. The chain is DNA replication and repair protein RecF from Xanthomonas campestris pv. campestris (strain 8004).